We begin with the raw amino-acid sequence, 240 residues long: Putative RING finger protein ORF96 (240 aa).

The RING-type 1 zinc-finger motif lies at 9-44 (CVVCMEEKPLVVFEPCMHHNCCESCSGHVSNCPYCR). The segment at 150–202 (CVICKKEIKEEVGKTYMHACCTATICKPCAKAILKAMVEKEITENLPFCPYCF) adopts an RING-type 2; degenerate zinc-finger fold.

The polypeptide is Putative RING finger protein ORF96 (Ostreid herpesvirus 1 (isolate France) (OsHV-1)).